The primary structure comprises 65 residues: uncharacterized protein (65 aa).

It is found in the plastid. The protein resides in the chloroplast. This is an uncharacterized protein from Porphyra purpurea (Red seaweed).